A 275-amino-acid polypeptide reads, in one-letter code: Epidermal growth factor-like protein 7 (275 aa).

Positions 1–21 are cleaved as a signal peptide; it reads MWGSGELLVAWFLVLAADGTT. Residues 28-105 form the EMI domain; the sequence is SRRVCTVGIS…TSGLPGACGA (78 aa). Cystine bridges form between Cys32–Cys90, Cys57–Cys63, Cys89–Cys103, Cys108–Cys118, Cys112–Cys124, Cys126–Cys135, Cys142–Cys153, and Cys149–Cys162. Positions 104–136 constitute an EGF-like 1 domain; that stretch reads GAAICQPPCGNGGSCIRPGHCRCPVGWQGDTCQ. The Cell attachment site signature appears at 131–133; that stretch reads QGD. The EGF-like 2; calcium-binding domain occupies 138-178; the sequence is DVDECSTGEASCPQRCVNTVGSYWCQGWEGQSPSADGTRCL. Residues 173–193 form a disordered region; it reads DGTRCLSKEGPSPVAPNPTAG. A coiled-coil region spans residues 196–220; sequence SMAREEVYRLQARVDVLEQKLQLVL.

As to quaternary structure, interacts with ITGAV/ITGB3 in an RGD-dependent manner, increasing endothelial cell's motility. As to expression, expressed specifically by endothelial cells of the highly vascularized organs heart, lung and kidney.

The protein resides in the secreted. Its subcellular location is the extracellular space. Functionally, regulates vascular tubulogenesis in vivo. Inhibits platelet-derived growth factor (PDGF)-BB-induced smooth muscle cell migration and promotes endothelial cell adhesion to the extracellular matrix and angiogenesis. The polypeptide is Epidermal growth factor-like protein 7 (Egfl7) (Mus musculus (Mouse)).